A 167-amino-acid chain; its full sequence is Heme-degrading monooxygenase (167 aa).

Residues 1 to 50 (MKKVFITTGTEHYLRQLMANYTGGNVTLLQNFSQSLLYQESTGEKLFQEG) form an important for catalysis region. Positions 67 to 154 (VVVFEYIHLR…NNTQSGFSHE (88 aa)) constitute an ABM domain.

Belongs to the antibiotic biosynthesis monooxygenase family. Monomer.

It is found in the cytoplasm. Catalyzes the degradation of heme to biliverdin in the presence of a suitable electron donor such as ascorbate, with the subsequent release of iron. Hardly any CO is released by the heme degradation reaction. Binds heme. Allows bacterial pathogens to use the host heme as an iron source. Release of iron from heme may play a crucial role in the pathogenicity of L.monocytogenes. The chain is Heme-degrading monooxygenase from Listeria monocytogenes serovar 1/2a (strain ATCC BAA-679 / EGD-e).